We begin with the raw amino-acid sequence, 111 residues long: Probable 4-amino-4-deoxy-L-arabinose-phosphoundecaprenol flippase subunit ArnE (111 aa).

3 consecutive transmembrane segments (helical) span residues 38–58 (LWLG…LLVL), 61–81 (LPVG…TLAA), and 91–111 (PRHW…GSAA). One can recognise an EamA domain in the interval 40–109 (LGLALICMGA…IISGIIILGS (70 aa)).

The protein belongs to the ArnE family. In terms of assembly, heterodimer of ArnE and ArnF.

The protein localises to the cell inner membrane. Its pathway is bacterial outer membrane biogenesis; lipopolysaccharide biosynthesis. In terms of biological role, translocates 4-amino-4-deoxy-L-arabinose-phosphoundecaprenol (alpha-L-Ara4N-phosphoundecaprenol) from the cytoplasmic to the periplasmic side of the inner membrane. This is Probable 4-amino-4-deoxy-L-arabinose-phosphoundecaprenol flippase subunit ArnE from Salmonella heidelberg (strain SL476).